A 58-amino-acid polypeptide reads, in one-letter code: Small ribosomal subunit protein bS21 (58 aa).

This sequence belongs to the bacterial ribosomal protein bS21 family.

This Latilactobacillus sakei subsp. sakei (strain 23K) (Lactobacillus sakei subsp. sakei) protein is Small ribosomal subunit protein bS21.